Consider the following 114-residue polypeptide: uncharacterized protein (114 aa).

Transmembrane regions (helical) follow at residues 38-60 (PLWF…TAGI), 64-86 (YAAI…AHMF), and 91-113 (SVIM…MGSY).

The protein localises to the cell membrane. This is an uncharacterized protein from Bacillus subtilis (strain 168).